We begin with the raw amino-acid sequence, 150 residues long: Large ribosomal subunit protein uL13 (150 aa).

This sequence belongs to the universal ribosomal protein uL13 family. In terms of assembly, part of the 50S ribosomal subunit.

Functionally, this protein is one of the early assembly proteins of the 50S ribosomal subunit, although it is not seen to bind rRNA by itself. It is important during the early stages of 50S assembly. This Chlamydia caviae (strain ATCC VR-813 / DSM 19441 / 03DC25 / GPIC) (Chlamydophila caviae) protein is Large ribosomal subunit protein uL13.